The chain runs to 188 residues: Heterodisulfide reductase subunit C-like protein (188 aa).

2 consecutive 4Fe-4S ferredoxin-type domains span residues K34–Y64 and D78–M109. [4Fe-4S] cluster is bound by residues C44, C47, C50, C54, C89, C92, C95, and C99.

This sequence belongs to the HdrC family. In terms of assembly, the heterodisulfide reductase is composed of three subunits; HdlA, HdlB and HdlC. It forms a complex with the F420-non-reducing hydrogenase (Mvh), which provides the reducing equivalents to the heterodisulfide reductase.

The protein resides in the cytoplasm. Its function is as follows. Has oxidoreductase activity. The Hdl and Mvh subunits may together mediate electron transfer from hydrogen to an unidentified electron acceptor on the cytoplasmic side of the membrane. The protein is Heterodisulfide reductase subunit C-like protein (hdlC) of Archaeoglobus profundus (strain DSM 5631 / JCM 9629 / NBRC 100127 / Av18).